Consider the following 431-residue polypeptide: MITDRVSDYLEKIEKSDVNAFIDVNSEKVLKEAEELEKNDALKNKPLYGKIVAVKSNINVKGYKISCASKTLDNYIGTYDATVVKKLRSQGALIVGMTNMDEFASGSSGETSYFGPTKNPAAMDRIPGGSSSGSAAAVAADLCDMAIGSDTGGSIRNPASHCGIVGFKPSYGVVSRQGLCDLAMSFDQIGPLTKNAEDALVLTNAIKGIDRSDSTSLETPKFEKKDISNYKVGVVKEFMDVTDEKIRNEIEKGIEVFKDMGCKIVDLSYKYIDLALPTYYLINYVEFFSATRKYDGRRYGEFIEEACGEEVLRRILIGKHISEQEFSGKYYKKALQARKSMKKEMLGLFNSADLIVGPTVPKLPHKLGENLSPMEMYAYDVLTVPTNICGICSGVVRCGNISGVPVGLQIQGAPLEDEKVLSAMIEFEKNY.

Residues Lys-55 and Ser-130 each act as charge relay system in the active site. The active-site Acyl-ester intermediate is Ser-154.

This sequence belongs to the amidase family. GatA subfamily. As to quaternary structure, heterotrimer of A, B and C subunits.

It catalyses the reaction L-glutamyl-tRNA(Gln) + L-glutamine + ATP + H2O = L-glutaminyl-tRNA(Gln) + L-glutamate + ADP + phosphate + H(+). In terms of biological role, allows the formation of correctly charged Gln-tRNA(Gln) through the transamidation of misacylated Glu-tRNA(Gln) in organisms which lack glutaminyl-tRNA synthetase. The reaction takes place in the presence of glutamine and ATP through an activated gamma-phospho-Glu-tRNA(Gln). The chain is Glutamyl-tRNA(Gln) amidotransferase subunit A from Methanococcus maripaludis (strain C7 / ATCC BAA-1331).